The following is a 453-amino-acid chain: Pup--protein ligase (453 aa).

Glu-9 provides a ligand contact to Mg(2+). Arg-53 serves as a coordination point for ATP. Tyr-55 serves as a coordination point for Mg(2+). Asp-57 (proton acceptor) is an active-site residue. Glu-63 is a binding site for Mg(2+). Positions 66 and 420 each coordinate ATP.

It belongs to the Pup ligase/Pup deamidase family. Pup-conjugating enzyme subfamily.

The catalysed reaction is ATP + [prokaryotic ubiquitin-like protein]-L-glutamate + [protein]-L-lysine = ADP + phosphate + N(6)-([prokaryotic ubiquitin-like protein]-gamma-L-glutamyl)-[protein]-L-lysine.. It functions in the pathway protein degradation; proteasomal Pup-dependent pathway. The protein operates within protein modification; protein pupylation. In terms of biological role, catalyzes the covalent attachment of the prokaryotic ubiquitin-like protein modifier Pup to the proteasomal substrate proteins, thereby targeting them for proteasomal degradation. This tagging system is termed pupylation. The ligation reaction involves the side-chain carboxylate of the C-terminal glutamate of Pup and the side-chain amino group of a substrate lysine. The chain is Pup--protein ligase from Streptomyces scabiei (strain 87.22).